Consider the following 1549-residue polypeptide: Zinc finger MYM-type protein 4 (1549 aa).

Alanine 2 is subject to N-acetylalanine. The tract at residues 83-108 is disordered; sequence VVSSDNEDEQDCSSKDNLVSSVHTDG. The segment covering 97-106 has biased composition (polar residues); the sequence is KDNLVSSVHT. Threonine 106 carries the post-translational modification Phosphothreonine. Phosphoserine occurs at positions 109 and 121. Glycyl lysine isopeptide (Lys-Gly) (interchain with G-Cter in SUMO2) cross-links involve residues lysine 139 and lysine 148. Serine 161 bears the Phosphoserine mark. Residue lysine 195 forms a Glycyl lysine isopeptide (Lys-Gly) (interchain with G-Cter in SUMO2) linkage. Serine 197 bears the Phosphoserine mark. Glycyl lysine isopeptide (Lys-Gly) (interchain with G-Cter in SUMO2) cross-links involve residues lysine 201 and lysine 232. Serine 242 bears the Phosphoserine mark. Lysine 250 participates in a covalent cross-link: Glycyl lysine isopeptide (Lys-Gly) (interchain with G-Cter in SUMO1); alternate. Lysine 250 is covalently cross-linked (Glycyl lysine isopeptide (Lys-Gly) (interchain with G-Cter in SUMO2); alternate). A disordered region spans residues 267–291; it reads GLLDRVKDEPDNAQEYSHGQQQKTQ. Residues lysine 273, lysine 289, lysine 327, lysine 400, lysine 428, and lysine 430 each participate in a glycyl lysine isopeptide (Lys-Gly) (interchain with G-Cter in SUMO2) cross-link. The segment covering 280–290 has biased composition (polar residues); sequence QEYSHGQQQKT. MYM-type zinc fingers lie at residues 362-402, 414-457, 464-499, 510-544, 554-592, 600-631, 708-742, 749-788, and 795-829; these read QLFC…PKDV, KDFC…RHEV, HKLC…GSGQ, KKFC…AEMI, ELFC…QYHL, RNFC…LSQG, FQFC…KETV, KSFC…LIQN, and EDFC…SESL. Glycyl lysine isopeptide (Lys-Gly) (interchain with G-Cter in SUMO2) cross-links involve residues lysine 1035 and lysine 1062. 2 positions are modified to phosphoserine: serine 1065 and serine 1072. Residues lysine 1081 and lysine 1128 each participate in a glycyl lysine isopeptide (Lys-Gly) (interchain with G-Cter in SUMO2) cross-link. Positions 1124 to 1185 are disordered; the sequence is DSELKPFSKG…RRGRKKSVVP (62 aa). Basic and acidic residues predominate over residues 1125-1135; the sequence is SELKPFSKGET. The segment covering 1161–1182 has biased composition (basic residues); sequence SRTRRRHRDGFPQPRRRGRKKS. Phosphoserine occurs at positions 1182 and 1257. Lysine 1432 is covalently cross-linked (Glycyl lysine isopeptide (Lys-Gly) (interchain with G-Cter in SUMO2)). A phosphoserine mark is found at serine 1540, serine 1543, and serine 1548.

Plays a role in the regulation of cell morphology and cytoskeletal organization. The protein is Zinc finger MYM-type protein 4 (Zmym4) of Mus musculus (Mouse).